Reading from the N-terminus, the 206-residue chain is Ribonuclease HII (206 aa).

One can recognise an RNase H type-2 domain in the interval 18-206 (GRVAGVDEVG…PVREWLEANS (189 aa)). A divalent metal cation-binding residues include aspartate 24, glutamate 25, and aspartate 116.

The protein belongs to the RNase HII family. Requires Mn(2+) as cofactor. Mg(2+) is required as a cofactor.

It localises to the cytoplasm. The enzyme catalyses Endonucleolytic cleavage to 5'-phosphomonoester.. Endonuclease that specifically degrades the RNA of RNA-DNA hybrids. This is Ribonuclease HII from Shewanella amazonensis (strain ATCC BAA-1098 / SB2B).